The chain runs to 159 residues: MREQPKNQISPDGLKVWRLQEIIISAVCLLIVIAVAVLSYYFHWPYWISGVLGAVWLLGSIVTVFIIPKVRHKVWRYEVHEHEIDIQSGIFVVTRVIVPMVRVQHVDTSQGPLLKKYNLATVKISTAATVHSIPALEMEEADRLRDSISRLARVTDDDV.

The next 2 membrane-spanning stretches (helical) occupy residues 22 to 42 and 47 to 67; these read IIIS…SYYF and WISG…VFII.

This sequence belongs to the UPF0699 family.

It localises to the cell membrane. In Bacillus subtilis (strain 168), this protein is UPF0699 transmembrane protein YdbS (ydbS).